Here is a 284-residue protein sequence, read N- to C-terminus: MAAPNEFYETLKQRLAGVKHIVLVLSGKGGVGKSTVASQMAIGLIHRGLKVGLLDIDLTGPSIPTMFGVADQQVHTSSEGWVPLYKYDQRLAIMSIGFLLDSRDEAVIWRGPKKNAMIQQFLSEVCWDELDCLVVDTPPGTSDEHLSIVDALKLCKPDGAILVTTPQGVALSDVRREAEFCRKARLKVLGVVENMSGFACPHCKDCTNLFSKGGGEKLAQEIAAPFLGAIPIDPMLGQSLSRGEDFLASCQAAPSYEAVAALIDPLMAQLGLVQATADTSTPSH.

27-34 (GKGGVGKS) contributes to the ATP binding site. [4Fe-4S] cluster-binding residues include Cys-200 and Cys-203.

Belongs to the Mrp/NBP35 ATP-binding proteins family. NUBP2/CFD1 subfamily. Heterotetramer of 2 NUBP1 and 2 NUBP2 chains. The cofactor is [4Fe-4S] cluster.

Its subcellular location is the cytoplasm. Functionally, component of the cytosolic iron-sulfur (Fe/S) protein assembly (CIA) machinery. Required for maturation of extramitochondrial Fe-S proteins. The NUBP1-NUBP2 heterotetramer forms a Fe-S scaffold complex, mediating the de novo assembly of an Fe-S cluster and its transfer to target apoproteins. The protein is Cytosolic Fe-S cluster assembly factor NUBP2 homolog of Monosiga brevicollis (Choanoflagellate).